The following is a 122-amino-acid chain: RxLR effector protein Avh52 (122 aa).

A signal peptide spans 1–21; that stretch reads MRLTSILVLVIAATFHTTGTA. Residues 50–68 carry the RxLR-dEER motif; sequence RLLRRVEKDKVDYEQDEQR. Residues 69–86 form a TAP1-binding region; that stretch reads SFGALKDAVKKLNPVTAV. The segment at 87–98 is nuclear localization signal (NLS); it reads KKFFKQRARRKK.

Belongs to the RxLR effector family. Interacts with host acetyl transferase TAP1.

The protein resides in the secreted. Its subcellular location is the host nucleus. In terms of biological role, effector that suppresses plant defense responses during the early stages of pathogen infection. Suppresses cell death induced by effectors and PAMPs in plant hosts. Interacts with host acetyltransferase TAP1 and causes TAP1 relocation into the nucleus where it acetylates histones H2A and H3 during early infection, thereby promoting susceptibility of host plant to P.sojae. This is RxLR effector protein Avh52 from Phytophthora sojae (Soybean stem and root rot agent).